The chain runs to 364 residues: RNA polymerase sigma factor SigA (364 aa).

Residues 132–202 (LAEANLRLVV…TRAIADQART (71 aa)) are sigma-70 factor domain-2. The short motif at 156–159 (DLIQ) is the Interaction with polymerase core subunit RpoC element. Positions 211–287 (ETINKLIRVQ…DDVIESPVDY (77 aa)) are sigma-70 factor domain-3. The sigma-70 factor domain-4 stretch occupies residues 300–353 (VMDTLTDREENVLRMRFGLDDGRMHTLEDVGKQFKVTRERIRQIEAKAIKKLRH). The H-T-H motif DNA-binding region spans 326–345 (LEDVGKQFKVTRERIRQIEA).

Belongs to the sigma-70 factor family. RpoD/SigA subfamily. As to quaternary structure, interacts transiently with the RNA polymerase catalytic core.

The protein resides in the cytoplasm. Functionally, sigma factors are initiation factors that promote the attachment of RNA polymerase to specific initiation sites and are then released. This sigma factor is the primary sigma factor during exponential growth. The chain is RNA polymerase sigma factor SigA from Lactococcus lactis subsp. cremoris (Streptococcus cremoris).